Consider the following 487-residue polypeptide: N-succinylglutamate 5-semialdehyde dehydrogenase (487 aa).

221–226 (GSSDTG) contacts NAD(+). Residues Glu244 and Cys278 contribute to the active site.

It belongs to the aldehyde dehydrogenase family. AstD subfamily.

It catalyses the reaction N-succinyl-L-glutamate 5-semialdehyde + NAD(+) + H2O = N-succinyl-L-glutamate + NADH + 2 H(+). It functions in the pathway amino-acid degradation; L-arginine degradation via AST pathway; L-glutamate and succinate from L-arginine: step 4/5. In terms of biological role, catalyzes the NAD-dependent reduction of succinylglutamate semialdehyde into succinylglutamate. The sequence is that of N-succinylglutamate 5-semialdehyde dehydrogenase from Burkholderia cenocepacia (strain HI2424).